We begin with the raw amino-acid sequence, 278 residues long: Imidazole glycerol phosphate synthase subunit HisF (278 aa).

Catalysis depends on residues aspartate 11 and aspartate 130.

Belongs to the HisA/HisF family. In terms of assembly, heterodimer of HisH and HisF.

The protein resides in the cytoplasm. The enzyme catalyses 5-[(5-phospho-1-deoxy-D-ribulos-1-ylimino)methylamino]-1-(5-phospho-beta-D-ribosyl)imidazole-4-carboxamide + L-glutamine = D-erythro-1-(imidazol-4-yl)glycerol 3-phosphate + 5-amino-1-(5-phospho-beta-D-ribosyl)imidazole-4-carboxamide + L-glutamate + H(+). It functions in the pathway amino-acid biosynthesis; L-histidine biosynthesis; L-histidine from 5-phospho-alpha-D-ribose 1-diphosphate: step 5/9. Functionally, IGPS catalyzes the conversion of PRFAR and glutamine to IGP, AICAR and glutamate. The HisF subunit catalyzes the cyclization activity that produces IGP and AICAR from PRFAR using the ammonia provided by the HisH subunit. This chain is Imidazole glycerol phosphate synthase subunit HisF, found in Thermodesulfovibrio yellowstonii (strain ATCC 51303 / DSM 11347 / YP87).